We begin with the raw amino-acid sequence, 709 residues long: Tyrosine-protein phosphatase cdc-14 (709 aa).

The region spanning 196–354 (DFNWIIPGKI…QKFCWSLSQS (159 aa)) is the Tyrosine-protein phosphatase domain. C295 (phosphocysteine intermediate) is an active-site residue. A Nuclear localization signal motif is present at residues 366 to 371 (KRNVRR). The Nuclear export signal signature appears at 372–381 (LVNQVDDINL). Disordered regions lie at residues 403 to 541 (VQVQ…LTRT), 573 to 594 (RYLS…GTSP), and 628 to 661 (ESKP…PYPS). Over residues 404–413 (QVQNGRSTAP) the composition is skewed to polar residues. The segment covering 463–479 (TTSPNSSSSRRFVKSST) has biased composition (low complexity). Composition is skewed to polar residues over residues 480-490 (PQMTVPSQAYL) and 501-521 (PSKN…TPNG). Positions 526–541 (RTRNSSGNTTSTLTRT) are enriched in low complexity. Positions 639–649 (PGTSKSTSSLK) are enriched in polar residues.

This sequence belongs to the protein-tyrosine phosphatase family. Non-receptor class CDC14 subfamily.

The protein localises to the cytoplasm. The protein resides in the cytoskeleton. It is found in the microtubule organizing center. Its subcellular location is the centrosome. It localises to the spindle. The protein localises to the midbody. The protein resides in the nucleus. It carries out the reaction O-phospho-L-tyrosyl-[protein] + H2O = L-tyrosyl-[protein] + phosphate. With respect to regulation, inhibited by sodium orthovanadate. Weakly inhibited by sodium fluoride and okadaic acid. Functionally, protein phosphatase that negatively regulates the G1-to-S phase transition to inhibit the cell cycle and establish quiescence in cells of multiple lineages including vulval, hypodermal and intestinal. Promotes nuclear accumulation and activity of the cyclin-dependent kinase inhibitor cki-1 which leads to inhibition of G1 progression during vulval tissue development. Has been shown to not be required for cytokinesis. However, in the embryo, in a contrasting study, has been shown to act as a regulator of central spindle formation and cytokinesis, and may be required for localization of the spindle component zen-4, and its interacting partner air-2 at the spindle during late cell divisions. Main regulator of cell cycle arrest in vulval precursor cells. The polypeptide is Tyrosine-protein phosphatase cdc-14 (Caenorhabditis elegans).